The sequence spans 106 residues: Small ribosomal subunit protein uS10 (106 aa).

The protein belongs to the universal ribosomal protein uS10 family. Part of the 30S ribosomal subunit.

Its function is as follows. Involved in the binding of tRNA to the ribosomes. This is Small ribosomal subunit protein uS10 from Wolbachia sp. subsp. Drosophila simulans (strain wRi).